The sequence spans 74 residues: MKKNAPKSFEEALSRLESLTQAMQGEMPLEDALAAYQEGNELVIYCQTKLAQVEQKLQVLDADGLKELNLESDE.

This sequence belongs to the XseB family. Heterooligomer composed of large and small subunits.

It is found in the cytoplasm. The enzyme catalyses Exonucleolytic cleavage in either 5'- to 3'- or 3'- to 5'-direction to yield nucleoside 5'-phosphates.. In terms of biological role, bidirectionally degrades single-stranded DNA into large acid-insoluble oligonucleotides, which are then degraded further into small acid-soluble oligonucleotides. The polypeptide is Exodeoxyribonuclease 7 small subunit (Neisseria meningitidis serogroup A / serotype 4A (strain DSM 15465 / Z2491)).